Reading from the N-terminus, the 1620-residue chain is Myb-like protein X (1620 aa).

Residues 1–13 (MSTIGNNASSIGN) show a composition bias toward polar residues. Disordered stretches follow at residues 1 to 57 (MSTI…TTTT), 176 to 204 (TGSG…SNIG), 294 to 318 (FFQD…NMTE), and 450 to 849 (KEEK…TKSA). Over residues 28–57 (PPTTTTTTTTTTTTTTTTPTTTTPTTTTTT) the composition is skewed to low complexity. Over residues 177 to 187 (GSGGIGGGGSG) the composition is skewed to gly residues. An SWIRM domain is found at 310 to 421 (GSGSNNMTEI…CFVNSGDYMN (112 aa)). The span at 450 to 497 (KEEKERLEREEKERLEREEKQEKEEKERLEKEEKERLEREEKQEKEEK) shows a compositional bias: basic and acidic residues. The segment covering 498 to 511 (EEKEEKEENEEKEE) has biased composition (acidic residues). The span at 512–568 (KEEKEKEEKEEKEKQEKEDDKEKQENENEQEKIEKKENKNDSQNKEIKENHDKKDET) shows a compositional bias: basic and acidic residues. A compositionally biased stretch (low complexity) spans 570-598 (DSNNTTTTTTTTTTTSTNTLVAESSSSSS). The span at 606 to 628 (KEMKEQPVQENKDKEMMETDTTK) shows a compositional bias: basic and acidic residues. Residues 629-645 (ENNGVETTETTNQTTDS) are compositionally biased toward low complexity. The segment covering 647–798 (ETDKEMKDQP…EIKKDKLKEN (152 aa)) has biased composition (basic and acidic residues). Over residues 799–834 (EEVEGEIEGENDEGEVVEEDEDEEMEIEEDEEDEED) the composition is skewed to acidic residues. One can recognise an SANT domain in the interval 925–977 (PEEFGWTDIETLLLLEGIEIFRDNWQEISDYIGGSKTPEQCLTHFIRLPIEDE). The tract at residues 1049–1506 (QPSKEELERI…DDDEDVEMET (458 aa)) is disordered. Basic and acidic residues-rich tracts occupy residues 1051–1195 (SKEE…DKSD), 1219–1255 (ETVE…KDDN), and 1264–1302 (HNKE…EKDL). The span at 1303–1325 (NNLSESQSSNDQSKSNEQMSSDN) shows a compositional bias: low complexity. A compositionally biased stretch (polar residues) spans 1338–1350 (TQITSKEQNITTD). Low complexity-rich tracts occupy residues 1358–1382 (TPTT…TTNT) and 1390–1416 (NETN…ESNN). 2 stretches are compositionally biased toward acidic residues: residues 1467-1481 (EENE…ENDL) and 1493-1504 (VGEEDDDEDVEM).

The protein resides in the nucleus. In Dictyostelium discoideum (Social amoeba), this protein is Myb-like protein X (mybX).